The chain runs to 409 residues: uncharacterized protein (409 aa).

The signal sequence occupies residues 1–26 (MKKELLASLVLCLSLSPLVSTNEVFA).

This is an uncharacterized protein from Bacillus subtilis (strain 168).